The following is a 508-amino-acid chain: Prenylcysteine oxidase 1 (508 aa).

An N-terminal signal peptide occupies residues 1 to 31; sequence MDPAAPGLACSILRLGLGLLLLCSWWYPGSA. Residues Asn-199, Asn-291, and Asn-356 are each glycosylated (N-linked (GlcNAc...) asparagine).

The protein belongs to the prenylcysteine oxidase family. Requires FAD as cofactor.

Its subcellular location is the lysosome. The catalysed reaction is an S-polyprenyl-L-cysteine + O2 + H2O = a polyprenal + L-cysteine + H2O2. It catalyses the reaction S-(2E,6E)-farnesyl-L-cysteine + O2 + H2O = (2E,6E)-farnesal + L-cysteine + H2O2. It carries out the reaction [(2E,6E,10E)-geranylgeranyl]-L-cysteine + O2 + H2O = (2E,6E,10E)-geranylgeranial + L-cysteine + H2O2. Its function is as follows. Prenylcysteine oxidase that cleaves the thioether bond of prenyl-L-cysteines, such as farnesylcysteine and geranylgeranylcysteine. Only active against free prenylcysteines and not prenylcysteine residues within prenylated proteins or peptides. Involved in the final step in the degradation of prenylated proteins, by degrading prenylcysteines after the protein has been degraded. This chain is Prenylcysteine oxidase 1, found in Bos taurus (Bovine).